The primary structure comprises 356 residues: Vesicular integral-membrane protein VIP36 (356 aa).

The first 44 residues, 1-44, serve as a signal peptide directing secretion; that stretch reads MAAEGWIWRWGWGRRCLGRPGLLGPGPGPTTPLFLLLLLGSVTA. At 45-322 the chain is on the lumenal side; that stretch reads DITDGNSEHL…FRSGPLTGWR (278 aa). Positions 52 to 276 constitute an L-type lectin-like domain; sequence EHLKREHSLI…DIISMKLFQL (225 aa). Ser-96 and Asp-131 together coordinate a carbohydrate. Residues Asp-162, Tyr-164, and Asn-166 each coordinate Ca(2+). 164–166 contributes to the a carbohydrate binding site; the sequence is YPN. Asn-183 carries an N-linked (GlcNAc...) asparagine glycan. Residue His-190 coordinates a carbohydrate. Asp-193 serves as a coordination point for Ca(2+). Cys-202 and Cys-239 are oxidised to a cystine. 260-262 serves as a coordination point for a carbohydrate; it reads GDL. The chain crosses the membrane as a helical span at residues 323–345; the sequence is VFLLLLCALLGIVVCAVVGAVVF. The Cytoplasmic segment spans residues 346 to 356; that stretch reads QKRQERNKRFY.

Requires Ca(2+) as cofactor. In terms of tissue distribution, ubiquitous.

It localises to the endoplasmic reticulum-Golgi intermediate compartment membrane. It is found in the golgi apparatus membrane. The protein localises to the endoplasmic reticulum membrane. In terms of biological role, plays a role as an intracellular lectin in the early secretory pathway. Interacts with N-acetyl-D-galactosamine and high-mannose type glycans and may also bind to O-linked glycans. Involved in the transport and sorting of glycoproteins carrying high mannose-type glycans. The sequence is that of Vesicular integral-membrane protein VIP36 (LMAN2) from Homo sapiens (Human).